Consider the following 103-residue polypeptide: ESAT-6-like protein EsxF (103 aa).

Belongs to the WXG100 family. CFP-10 subfamily.

The protein resides in the secreted. The protein is ESAT-6-like protein EsxF of Mycobacterium tuberculosis (strain CDC 1551 / Oshkosh).